The primary structure comprises 104 residues: Large ribosomal subunit protein uL24 (104 aa).

Belongs to the universal ribosomal protein uL24 family. Part of the 50S ribosomal subunit.

One of two assembly initiator proteins, it binds directly to the 5'-end of the 23S rRNA, where it nucleates assembly of the 50S subunit. Its function is as follows. One of the proteins that surrounds the polypeptide exit tunnel on the outside of the subunit. The protein is Large ribosomal subunit protein uL24 of Neorickettsia sennetsu (strain ATCC VR-367 / Miyayama) (Ehrlichia sennetsu).